The following is a 399-amino-acid chain: Acetylornithine aminotransferase (399 aa).

Residues 102–103 (GA) and phenylalanine 135 each bind pyridoxal 5'-phosphate. Arginine 138 is a N(2)-acetyl-L-ornithine binding site. 220–223 (DEIQ) is a binding site for pyridoxal 5'-phosphate. Lysine 249 is modified (N6-(pyridoxal phosphate)lysine). N(2)-acetyl-L-ornithine is bound at residue serine 277. Pyridoxal 5'-phosphate is bound at residue threonine 278.

Belongs to the class-III pyridoxal-phosphate-dependent aminotransferase family. ArgD subfamily. As to quaternary structure, homodimer. The cofactor is pyridoxal 5'-phosphate.

The protein resides in the cytoplasm. The enzyme catalyses N(2)-acetyl-L-ornithine + 2-oxoglutarate = N-acetyl-L-glutamate 5-semialdehyde + L-glutamate. It participates in amino-acid biosynthesis; L-arginine biosynthesis; N(2)-acetyl-L-ornithine from L-glutamate: step 4/4. The sequence is that of Acetylornithine aminotransferase from Oceanobacillus iheyensis (strain DSM 14371 / CIP 107618 / JCM 11309 / KCTC 3954 / HTE831).